The following is a 206-amino-acid chain: MCEPAPPKPTQSAWHSFPECPALLLLLSLLLLPLGLPVLGAPPRLICDSRVLERYILEAREAENVTMGCAQGCSFSENITVPDTKVNFYTWKRMDVGQQALEVWQGLALLSEAILRGQALLANASQPSETPQLHVDKAVSSLRSLTSLLRALGAQKEAMSLPEEASPAPLRTFTVDTLCKLFRIYSNFLRGKLTLYTGEACRRGDR.

Residues 1–40 form the signal peptide; sequence MCEPAPPKPTQSAWHSFPECPALLLLLSLLLLPLGLPVLG. 2 disulfide bridges follow: Cys-47/Cys-201 and Cys-69/Cys-73. N-linked (GlcNAc...) asparagine glycosylation is present at Asn-64. N-linked (GlcNAc...) asparagine glycosylation is found at Asn-78 and Asn-123.

This sequence belongs to the EPO/TPO family. In terms of tissue distribution, produced by kidney or liver of adult mammals and by liver of fetal or neonatal mammals.

Its subcellular location is the secreted. Functionally, hormone involved in the regulation of erythrocyte proliferation and differentiation and the maintenance of a physiological level of circulating erythrocyte mass. Binds to EPOR leading to EPOR dimerization and JAK2 activation thereby activating specific downstream effectors, including STAT1 and STAT3. In Canis lupus familiaris (Dog), this protein is Erythropoietin (EPO).